The sequence spans 133 residues: Small ribosomal subunit protein uS8 (133 aa).

The protein belongs to the universal ribosomal protein uS8 family. In terms of assembly, part of the 30S ribosomal subunit. Contacts proteins S5 and S12.

In terms of biological role, one of the primary rRNA binding proteins, it binds directly to 16S rRNA central domain where it helps coordinate assembly of the platform of the 30S subunit. The polypeptide is Small ribosomal subunit protein uS8 (Koribacter versatilis (strain Ellin345)).